The sequence spans 320 residues: Heterogeneous nuclear ribonucleoprotein A1 (320 aa).

At Met-1 the chain carries N-acetylmethionine. Ser-2 is modified (N-acetylserine; in Heterogeneous nuclear ribonucleoprotein A1, N-terminally processed). Residue Ser-2 is modified to Phosphoserine. N6-acetyllysine; alternate is present on Lys-3. Residue Lys-3 forms a Glycyl lysine isopeptide (Lys-Gly) (interchain with G-Cter in SUMO2); alternate linkage. Phosphoserine occurs at positions 4 and 6. The tract at residues 4 to 94 (SESPKEPEQL…EPKRAVSRED (91 aa)) is globular A domain. Lys-8 participates in a covalent cross-link: Glycyl lysine isopeptide (Lys-Gly) (interchain with G-Cter in SUMO2). 2 consecutive RRM domains span residues 14-97 (RKLF…DSQR) and 105-184 (KKIF…LSKQ). Ser-22 is subject to Phosphoserine. A Glycyl lysine isopeptide (Lys-Gly) (interchain with G-Cter in SUMO2) cross-link involves residue Lys-78. The globular B domain stretch occupies residues 95 to 185 (SQRPGAHLTV…EVRKALSKQE (91 aa)). A Glycyl lysine isopeptide (Lys-Gly) (interchain with G-Cter in SUMO) cross-link involves residue Lys-113. Residues Lys-179 and Lys-183 each participate in a glycyl lysine isopeptide (Lys-Gly) (interchain with G-Cter in SUMO2) cross-link. The interval 182–216 (SKQEMASASSSQRGRSGSGNFGGGRGGGFGGNDNF) is disordered. Ser-192 carries the post-translational modification Phosphoserine; by MKNK2. Arg-194 bears the Asymmetric dimethylarginine; alternate mark. At Arg-194 the chain carries Dimethylated arginine; alternate. Position 194 is an omega-N-methylarginine; alternate (Arg-194). The segment covering 197 to 216 (SGSGNFGGGRGGGFGGNDNF) has biased composition (gly residues). Phosphoserine is present on Ser-199. Residues Arg-206, Arg-218, Arg-225, and Arg-232 each carry the asymmetric dimethylarginine; alternate modification. Arg-206 bears the Dimethylated arginine; alternate mark. Arg-206, Arg-218, Arg-225, and Arg-232 each carry omega-N-methylarginine; alternate. Positions 218–240 (RGGNFSGRGGFGGSRGGGGYGGS) are RNA-binding RGG-box. Position 225 is a dimethylated arginine; alternate (Arg-225). The segment at 268 to 305 (NQSSNFGPMKGGNFGGRSLGPYGGGGQYFAKPRNQGGY) is nuclear targeting sequence. The segment covering 277-294 (KGGNFGGRSLGPYGGGGQ) has biased composition (gly residues). The interval 277 to 320 (KGGNFGGRSLGPYGGGGQYFAKPRNQGGYGGSSSSSSYGSGRRF) is disordered. The residue at position 284 (Arg-284) is an Omega-N-methylarginine. Ser-285 is modified (phosphoserine). Position 298 is an N6-acetyllysine; alternate (Lys-298). Lys-298 is covalently cross-linked (Glycyl lysine isopeptide (Lys-Gly) (interchain with G-Cter in SUMO2); alternate). Residue Arg-300 is modified to Omega-N-methylarginine. Positions 308–320 (SSSSSSYGSGRRF) are enriched in low complexity. The residue at position 309 (Ser-309) is a Phosphoserine. Residues Ser-310, Ser-311, and Ser-312 each carry the phosphoserine; by MKNK2 modification. Phosphoserine occurs at positions 313 and 316. An Omega-N-methylarginine modification is found at Arg-318.

Identified in the spliceosome C complex. Identified in a IGF2BP1-dependent mRNP granule complex containing untranslated mRNAs. Interacts with SEPT6, C9orf72, KHDRBS1, UBQLN2. Interacts with PPIA/CYPA. In terms of processing, sumoylated.

The protein localises to the nucleus. The protein resides in the cytoplasm. Functionally, involved in the packaging of pre-mRNA into hnRNP particles, transport of poly(A) mRNA from the nucleus to the cytoplasm and modulation of splice site selection. Plays a role in the splicing of pyruvate kinase PKM by binding repressively to sequences flanking PKM exon 9, inhibiting exon 9 inclusion and resulting in exon 10 inclusion and production of the PKM M2 isoform. Binds to the IRES and thereby inhibits the translation of the apoptosis protease activating factor APAF1. May bind to specific miRNA hairpins. This is Heterogeneous nuclear ribonucleoprotein A1 (HNRNPA1) from Macaca mulatta (Rhesus macaque).